The sequence spans 275 residues: 3-methyl-2-oxobutanoate hydroxymethyltransferase (275 aa).

Residues aspartate 44 and aspartate 83 each contribute to the Mg(2+) site. 3-methyl-2-oxobutanoate-binding positions include 44–45 (DS), aspartate 83, and lysine 113. Mg(2+) is bound at residue glutamate 115. Residue glutamate 182 is the Proton acceptor of the active site.

The protein belongs to the PanB family. Homodecamer; pentamer of dimers. The cofactor is Mg(2+).

The protein resides in the cytoplasm. It carries out the reaction 3-methyl-2-oxobutanoate + (6R)-5,10-methylene-5,6,7,8-tetrahydrofolate + H2O = 2-dehydropantoate + (6S)-5,6,7,8-tetrahydrofolate. It functions in the pathway cofactor biosynthesis; (R)-pantothenate biosynthesis; (R)-pantoate from 3-methyl-2-oxobutanoate: step 1/2. Functionally, catalyzes the reversible reaction in which hydroxymethyl group from 5,10-methylenetetrahydrofolate is transferred onto alpha-ketoisovalerate to form ketopantoate. In Clostridium botulinum (strain Loch Maree / Type A3), this protein is 3-methyl-2-oxobutanoate hydroxymethyltransferase.